The sequence spans 205 residues: MPGLLGKKIGMTSVFSADGKNVPCTVIEAGPCVVTQVKTVEKDGYAAVQLGFQDKKEKHTTKPLMGHFKKAGVTPKRHLAEFKEFENELNLGDTVTVELFDGADYVDVVGTSKGKGFQGVVKRHGFGGVGQSTHGQHNRARKPGSIGACSYPAKVFKGMRMGGQMGGDRVTVQNLQVLKVIAEHNLLLIKGSVPGCKGSIVLIEK.

Belongs to the universal ribosomal protein uL3 family. Part of the 50S ribosomal subunit. Forms a cluster with proteins L14 and L19.

Its function is as follows. One of the primary rRNA binding proteins, it binds directly near the 3'-end of the 23S rRNA, where it nucleates assembly of the 50S subunit. This chain is Large ribosomal subunit protein uL3, found in Bacteroides fragilis (strain ATCC 25285 / DSM 2151 / CCUG 4856 / JCM 11019 / LMG 10263 / NCTC 9343 / Onslow / VPI 2553 / EN-2).